Reading from the N-terminus, the 485-residue chain is ATP-dependent rRNA helicase RRP3 (485 aa).

Basic residues predominate over residues 1–10 (MPVLKKRKLA). A disordered region spans residues 1–55 (MPVLKKRKLAHTAQPDPIVSDLESSSSEASQQSHDEQLTAANEQDDESPQVQREE). Residues 20-32 (SDLESSSSEASQQ) show a composition bias toward low complexity. The Q motif signature appears at 59-87 (KSFKDLGIIDSLCEACEALGYKSPTPIQA). In terms of domain architecture, Helicase ATP-binding spans 90 to 261 (IPLALQGRDL…RASLSNPLRV (172 aa)). ATP is bound at residue 103 to 110 (AETGSGKT). The DEAD box signature appears at 209–212 (DEAD). A Helicase C-terminal domain is found at 285-433 (YKDIYLVYLL…EYKVEKEEVM (149 aa)). Residues 449–458 (EMKDLHEKRG) are compositionally biased toward basic and acidic residues. Residues 449–485 (EMKDLHEKRGSRGATLKGRRPAKGAKRGRDEMDREEG) are disordered. Positions 465-474 (KGRRPAKGAK) are enriched in basic residues. The segment covering 475-485 (RGRDEMDREEG) has biased composition (basic and acidic residues).

It belongs to the DEAD box helicase family. DDX47/RRP3 subfamily. In terms of assembly, interacts with the SSU processome.

The protein resides in the nucleus. It catalyses the reaction ATP + H2O = ADP + phosphate + H(+). In terms of biological role, ATP-dependent rRNA helicase required for pre-ribosomal RNA processing. Involved in the maturation of the 35S-pre-rRNA and to its cleavage to mature 18S rRNA. This Ajellomyces capsulatus (strain NAm1 / WU24) (Darling's disease fungus) protein is ATP-dependent rRNA helicase RRP3.